The following is a 101-amino-acid chain: Pore-forming peptide amoebapore C (101 aa).

The N-terminal stretch at 1–24 is a signal peptide; that stretch reads MKLFVLLCVFVLCLASQEKQQDRE. Residues 25–101 enclose the Saposin B-type domain; that stretch reads IPVLCPVCTS…KLICGLIHAC (77 aa). Cystine bridges form between cysteine 29/cysteine 101, cysteine 32/cysteine 95, and cysteine 59/cysteine 70.

In terms of assembly, monomer. Homodimer. Hexamer; formed during insertion in the membrane.

It is found in the cytoplasmic granule. Forms pores in the cell membrane of host cells. Has antibacterial activity against M.luteus, no activity against E.coli. Implicated in the cytolytic activity of the parasite. This Entamoeba histolytica (strain ATCC 30459 / HM-1:IMSS / ABRM) protein is Pore-forming peptide amoebapore C.